The sequence spans 96 residues: Large ribosomal subunit protein eL21 (96 aa).

Positions 1 to 22 are disordered; it reads MRKSKGFKSRSRYKLKRSIRPK.

This sequence belongs to the eukaryotic ribosomal protein eL21 family.

This Methanosphaera stadtmanae (strain ATCC 43021 / DSM 3091 / JCM 11832 / MCB-3) protein is Large ribosomal subunit protein eL21.